We begin with the raw amino-acid sequence, 1962 residues long: MQRKKKGLSILLAGTVALGALAVLPVGEIQAKAAISQQTKGSSLANTVTAATAKQAATDTTAATTNQAIATQLAAKGIDYNKLNKVQQQDIYVDVIVQMSAAPASENGTLRTDYSSTAEIQQETNKVIAAQASVKAAVEQVTQQTAGESYGYVVNGFSTKVRVVDIPKLKQIAGVKTVTLAKVYYPTDAKANSMANVQAVWSNYKYKGEGTVVSVIDSGIDPTHKDMRLSDDKDVKLTKSDVEKFTDTAKHGRYFNSKVPYGFNYADNNDTITDDTVDEQHGMHVAGIIGANGTGDDPAKSVVGVAPEAQLLAMKVFTNSDTSATTGSATLVSAIEDSAKIGADVLNMSLGSDSGNQTLEDPELAAVQNANESGTAAVISAGNSGTSGSATEGVNKDYYGLQDNEMVGSPGTSRGATTVASAENTDVITQAVTITDGTGLQLGPETIQLSSHDFTGSFDQKKFYIVKDASGNLSKGALADYTADAKGKIAIVKRGEFSFDDKQKYAQAAGAAGLIIVNTDGTATPMTSIALTTTFPTFGLSSVTGQKLVDWVTAHPDDSLGVKITLAMLPNQKYTEDKMSDFTSYGPVSNLSFKPDITAPGGNIWSTQNNNGYTNMSGTSMASPFIAGSQALLKQALNNKNNPFYAYYKQLKGTALTDFLKTVEMNTAQPINDINYNNVIVSPRRQGAGLVDVKAAIDALEKNPSTVVAENGYPAVELKDFTSTDKTFKLTFTNRTTHELTYQMDSNTDTNAVYTSATDPNSGVLYDKKIDGAAIKAGSNITVPAGKTAQIEFTLSLPKSFDQQQFVEGFLNFKGSDGSRLNLPYMGFFGDWNDGKIVDSLNGITYSPAGGNFGTVPLLKNKNTGTQYYGGMVTDADGNKTVDDQAIAFSSDKNALYNEISMKYYLLRNISNVQVDILDGQGNKVTTLSSSTNRKKTYYNAHSQQYIYYNAPAWDGTYYDQRDGNIKTADDGSYTYRISGVPEGGDKRQVFDVPFKLDSKAPTVRHVALSAKTENGKTQYYLTAEAKDDLSGLDATKSVKTEINEVTNLDATFTDAGTTADGYTKIETPLSDEQAQALGNGDNSAELYLTDNASNATDQDASVQKPGSTSFDLIVNGGGIPDKISSTTTGYEANTQGGGTYTFSGTYPAAVDGTYTDAQGKKHDLNTTYDAATNSFTASMPVTNADYAAQVDLYADKAHTQLLKHFDTKVRLTAPTFTDLKFNNGSDQTSEATIKVTGTVSADTKTVNVGDTVAALDAQHHFSVDVPVNYGDNTIKVTATDEDGNTTTEQKTITSSYDPDMLKNSVTFDQGVTFGANEFNATSAKFYDPKTGIATITGKVKHPTTTLQVDGKQIPIKDDLTFSFTLDLGTLGQKPFGVVVGDTTQNKTFQEALTFILDAVAPTLSLDSSTDAPVYTNDPNFQITGTATDNAQYLSLSINGSSVASQYVDININSGKPGHMAIDQPVKLLEGKNVLTVAVTDSEDNTTTKNITVYYEPKKTLAAPTVTPSTTEPAKTVTLTANSAATGETVQYSADGGKTYQDVPAAGVTVTANGTFKFKSTDLYGNESPAVDYVVTNIKADDPAQLQAAKQELTNLIASAKTLSASGKYDDATTTALAAATQKAQTALDQTNASVDSLTGANRDLQTAINQLAAKLPADKKTSLLNQLQSVKAALGTDLGNQTDSSTGKTFTAALDDLVAQAQAGTQTDDQLQATLAKVLDAVLAKLAEGIKAATPAEVGNAKDAATGKTWYADIADTLTSGQASADASDKLAHLQALQSLKTKVAAAVEAAKTVGKGDGTTGTSDKGGGQGTPAPAPGDTGKDKGDEGSQPSSGGNIPTKPATTTSTTTDDTTDRNGQLTSGTSDKGGGQGTPAPAPGDIGKDKGDEGSQPSSGGNIPTNPATTTSTTTDDTTDRNGQLTSGKGALPKTGETTERPAFGFLGVIVVSLMGVLGLKRKQREE.

A signal peptide spans 1 to 33 (MQRKKKGLSILLAGTVALGALAVLPVGEIQAKA). A propeptide spanning residues 34–187 (AISQQTKGSS…VTLAKVYYPT (154 aa)) is cleaved from the precursor. One can recognise a Peptidase S8 domain in the interval 191–697 (ANSMANVQAV…AGLVDVKAAI (507 aa)). Residues D217, H281, and S620 each act as charge relay system in the active site. Residues 1796–1938 (GKGDGTTGTS…KTGETTERPA (143 aa)) are disordered. Over residues 1797–1812 (KGDGTTGTSDKGGGQG) the composition is skewed to gly residues. 2 stretches are compositionally biased toward polar residues: residues 1856-1865 (RNGQLTSGTS) and 1890-1903 (SQPS…TNPA). Positions 1927–1931 (LPKTG) match the LPXTG sorting signal motif. T1930 bears the Pentaglycyl murein peptidoglycan amidated threonine mark. Positions 1931–1962 (GETTERPAFGFLGVIVVSLMGVLGLKRKQREE) are cleaved as a propeptide — removed by sortase.

The protein belongs to the peptidase S8 family.

It is found in the secreted. The protein localises to the cell wall. The enzyme catalyses Endopeptidase activity with very broad specificity, although some subsite preference have been noted, e.g. large hydrophobic residues in the P1 and P4 positions, and Pro in the P2 position. Best known for its action on caseins, although it has been shown to hydrolyze hemoglobin and oxidized insulin B-chain.. In terms of biological role, protease which breaks down milk proteins during the growth of the bacteria on milk. This Lactococcus lactis subsp. cremoris (strain SK11) protein is PIII-type proteinase (prtP).